A 452-amino-acid chain; its full sequence is Probable glycine dehydrogenase (decarboxylating) subunit 1 (452 aa).

It belongs to the GcvP family. N-terminal subunit subfamily. In terms of assembly, the glycine cleavage system is composed of four proteins: P, T, L and H. In this organism, the P 'protein' is a heterodimer of two subunits.

It carries out the reaction N(6)-[(R)-lipoyl]-L-lysyl-[glycine-cleavage complex H protein] + glycine + H(+) = N(6)-[(R)-S(8)-aminomethyldihydrolipoyl]-L-lysyl-[glycine-cleavage complex H protein] + CO2. Functionally, the glycine cleavage system catalyzes the degradation of glycine. The P protein binds the alpha-amino group of glycine through its pyridoxal phosphate cofactor; CO(2) is released and the remaining methylamine moiety is then transferred to the lipoamide cofactor of the H protein. The protein is Probable glycine dehydrogenase (decarboxylating) subunit 1 of Novosphingobium aromaticivorans (strain ATCC 700278 / DSM 12444 / CCUG 56034 / CIP 105152 / NBRC 16084 / F199).